The chain runs to 218 residues: Ependymin (218 aa).

Positions 1–20 (MHTVKLLCVVFSCLCAVAWG) are cleaved as a signal peptide. N-linked (GlcNAc...) asparagine glycosylation is found at asparagine 74 and asparagine 97.

It belongs to the ependymin family. In terms of assembly, forms disulfide-linked dimers. Post-translationally, binds calcium through the terminal sialic acids.

Its subcellular location is the secreted. May play a role in neural plasticity. May be involved during axon regeneration. The chain is Ependymin (epd) from Devario aequipinnatus (Giant danio).